Consider the following 459-residue polypeptide: MMEMPIDNLWSQVLERLQIELSRPTFETWIKTANAERLENNCLVIITPNPFARNWLQKYYISTIANVVQSILGHPVEIYITVAKGEEFEEIGGGGEWELPTTNIINETPNQNRQPNTELNAKYVFSRFVVGANNRMAHAASLAVAESPGREFNPLFLCGGVGLGKTHLMQAIGHYRWEICPNSKIFYVSTEQFTNDLITAIRNDSMQSFREHYRAADVLLVDDIQFIEGKEYTQEEFFHTFNTLHEAGKQVVIASDRPPNQIPSLQERLCSRFSMGLIADIQAPDLETRMAILQKKSEYEKIRLPRDVIEYIATNFTSNIRELEGALTRALAYISIWGLPMTVANLAPVLVTPMEKIEATPEAILTVIADNFDISIEDLKSNSRRREISWARQIGMYLMRQHTDLSFPRIGEEFGGKDHTTVLYSCDKIAQLVESDRGLSQTLRQLSDRIKMNSRSRKP.

The interval 1–74 (MMEMPIDNLW…ANVVQSILGH (74 aa)) is domain I, interacts with DnaA modulators. The segment at 74-117 (HPVEIYITVAKGEEFEEIGGGGEWELPTTNIINETPNQNRQPNT) is domain II. Residues 118 to 334 (ELNAKYVFSR…GALTRALAYI (217 aa)) are domain III, AAA+ region. ATP is bound by residues glycine 162, glycine 164, lysine 165, and threonine 166. The tract at residues 335-459 (SIWGLPMTVA…IKMNSRSRKP (125 aa)) is domain IV, binds dsDNA.

The protein belongs to the DnaA family. Oligomerizes as a right-handed, spiral filament on DNA at oriC.

The protein resides in the cytoplasm. Its function is as follows. Plays an essential role in the initiation and regulation of chromosomal replication. ATP-DnaA binds to the origin of replication (oriC) to initiate formation of the DNA replication initiation complex once per cell cycle. Binds the DnaA box (a 9 base pair repeat at the origin) and separates the double-stranded (ds)DNA. Forms a right-handed helical filament on oriC DNA; dsDNA binds to the exterior of the filament while single-stranded (ss)DNA is stabiized in the filament's interior. The ATP-DnaA-oriC complex binds and stabilizes one strand of the AT-rich DNA unwinding element (DUE), permitting loading of DNA polymerase. After initiation quickly degrades to an ADP-DnaA complex that is not apt for DNA replication. Binds acidic phospholipids. This chain is Chromosomal replication initiator protein DnaA, found in Nostoc sp. (strain PCC 7120 / SAG 25.82 / UTEX 2576).